A 59-amino-acid polypeptide reads, in one-letter code: Large ribosomal subunit protein uL30 (59 aa).

The protein belongs to the universal ribosomal protein uL30 family. As to quaternary structure, part of the 50S ribosomal subunit.

The chain is Large ribosomal subunit protein uL30 from Haemophilus ducreyi (strain 35000HP / ATCC 700724).